A 114-amino-acid polypeptide reads, in one-letter code: DNA-directed RNA polymerase subunit omega (114 aa).

Belongs to the RNA polymerase subunit omega family. As to quaternary structure, the RNAP catalytic core consists of 2 alpha, 1 beta, 1 beta' and 1 omega subunit. When a sigma factor is associated with the core the holoenzyme is formed, which can initiate transcription.

It carries out the reaction RNA(n) + a ribonucleoside 5'-triphosphate = RNA(n+1) + diphosphate. Its function is as follows. Promotes RNA polymerase assembly. Latches the N- and C-terminal regions of the beta' subunit thereby facilitating its interaction with the beta and alpha subunits. In Erythrobacter litoralis (strain HTCC2594), this protein is DNA-directed RNA polymerase subunit omega.